The sequence spans 512 residues: ATP synthase subunit alpha 2 (512 aa).

169–176 (GDRQTGKT) contacts ATP.

This sequence belongs to the ATPase alpha/beta chains family. F-type ATPases have 2 components, CF(1) - the catalytic core - and CF(0) - the membrane proton channel. CF(1) has five subunits: alpha(3), beta(3), gamma(1), delta(1), epsilon(1). CF(0) has four main subunits: a(1), b(1), b'(1) and c(9-12).

It localises to the cell inner membrane. It carries out the reaction ATP + H2O + 4 H(+)(in) = ADP + phosphate + 5 H(+)(out). In terms of biological role, produces ATP from ADP in the presence of a proton gradient across the membrane. The alpha chain is a regulatory subunit. The polypeptide is ATP synthase subunit alpha 2 (Dinoroseobacter shibae (strain DSM 16493 / NCIMB 14021 / DFL 12)).